Reading from the N-terminus, the 363-residue chain is 3-isopropylmalate dehydrogenase (363 aa).

78–91 (GPKWEHLPPAEQPE) serves as a coordination point for NAD(+). 4 residues coordinate substrate: arginine 99, arginine 109, arginine 138, and aspartate 227. Mg(2+)-binding residues include aspartate 227, aspartate 251, and aspartate 255. Residue 285–297 (GSAPDIAGKDIAN) participates in NAD(+) binding.

Belongs to the isocitrate and isopropylmalate dehydrogenases family. LeuB type 1 subfamily. Homodimer. Requires Mg(2+) as cofactor. The cofactor is Mn(2+).

It is found in the cytoplasm. The enzyme catalyses (2R,3S)-3-isopropylmalate + NAD(+) = 4-methyl-2-oxopentanoate + CO2 + NADH. Its pathway is amino-acid biosynthesis; L-leucine biosynthesis; L-leucine from 3-methyl-2-oxobutanoate: step 3/4. Functionally, catalyzes the oxidation of 3-carboxy-2-hydroxy-4-methylpentanoate (3-isopropylmalate) to 3-carboxy-4-methyl-2-oxopentanoate. The product decarboxylates to 4-methyl-2 oxopentanoate. This Pectobacterium atrosepticum (strain SCRI 1043 / ATCC BAA-672) (Erwinia carotovora subsp. atroseptica) protein is 3-isopropylmalate dehydrogenase.